The chain runs to 693 residues: Elongation factor G (693 aa).

Positions 8 to 282 (EHTRNIGIMA…AVIDFMPSPT (275 aa)) constitute a tr-type G domain. GTP is bound by residues 17–24 (AHIDAGKT), 81–85 (DTPGH), and 135–138 (NKMD).

The protein belongs to the TRAFAC class translation factor GTPase superfamily. Classic translation factor GTPase family. EF-G/EF-2 subfamily.

The protein localises to the cytoplasm. In terms of biological role, catalyzes the GTP-dependent ribosomal translocation step during translation elongation. During this step, the ribosome changes from the pre-translocational (PRE) to the post-translocational (POST) state as the newly formed A-site-bound peptidyl-tRNA and P-site-bound deacylated tRNA move to the P and E sites, respectively. Catalyzes the coordinated movement of the two tRNA molecules, the mRNA and conformational changes in the ribosome. This is Elongation factor G from Ruminiclostridium cellulolyticum (strain ATCC 35319 / DSM 5812 / JCM 6584 / H10) (Clostridium cellulolyticum).